Consider the following 345-residue polypeptide: Platelet-derived growth factor C (345 aa).

The signal sequence occupies residues 1 to 22; the sequence is MLLLGLLLLTSALAGQRTGTRA. The segment covering 24–33 has biased composition (polar residues); that stretch reads SNLSSKLQLS. Positions 24-45 are disordered; it reads SNLSSKLQLSSDKEQNGVQDPR. N-linked (GlcNAc...) asparagine glycosylation occurs at Asn25. The span at 34–45 shows a compositional bias: basic and acidic residues; sequence SDKEQNGVQDPR. The CUB domain maps to 46–163; it reads HERVVTISGN…PGFCIHYSII (118 aa). N-linked (GlcNAc...) asparagine glycosylation occurs at Asn55. Intrachain disulfides connect Cys104/Cys124, Cys250/Cys294, Cys280/Cys335, and Cys287/Cys337.

It belongs to the PDGF/VEGF growth factor family. In terms of assembly, homodimer; disulfide-linked. Interacts with PDGFRA homodimers, and with heterodimers formed by PDGFRA and PDGFRB. Interacts (via CUB domain) with PLAT (via kringle domain). In terms of processing, proteolytic removal of the N-terminal CUB domain releasing the core domain is necessary for unmasking the receptor-binding epitopes of the core domain. Cleavage after basic residues in the hinge region (region connecting the CUB and growth factor domains) gives rise to the receptor-binding form. Cleaved by PLAT and PLG. Sumoylated by SUMO1. Post-translationally, N-glycosylated. Mainly expressed in kidney, testis, liver, heart and brain (at protein level). Highly expressed in airway epithelium, interstitial cells and alveolar macrophages in the lung of mice overexpressing IL13. Expressed in the ovaries.

It is found in the cytoplasm. Its subcellular location is the cytosol. The protein resides in the secreted. It localises to the nucleus. The protein localises to the cytoplasmic granule. It is found in the cell membrane. Functionally, growth factor that plays an essential role in the regulation of embryonic development, cell proliferation, cell migration, survival and chemotaxis. Potent mitogen and chemoattractant for cells of mesenchymal origin. Required for normal skeleton formation during embryonic development, especially for normal development of the craniofacial skeleton and for normal development of the palate. Required for normal skin morphogenesis during embryonic development. Plays an important role in wound healing, where it appears to be involved in three stages: inflammation, proliferation and remodeling. Plays an important role in angiogenesis and blood vessel development. Involved in fibrotic processes, in which transformation of interstitial fibroblasts into myofibroblasts plus collagen deposition occurs. The CUB domain has mitogenic activity in coronary artery smooth muscle cells, suggesting a role beyond the maintenance of the latency of the PDGF domain. In the nucleus, PDGFC seems to have additional function. The sequence is that of Platelet-derived growth factor C (Pdgfc) from Mus musculus (Mouse).